Reading from the N-terminus, the 246-residue chain is Bacteriorhodopsin-II-like protein (246 aa).

The next 7 helical transmembrane spans lie at 7–27 (EATWLWIGTIGMVLGTVYFAV), 45–65 (TLIPAIAAAAYLAMATGLGVI), 82–102 (YADWLLTTPLLIIDLALVAGA), 107–127 (LYKLIIIDAIMILGGLAGSMM), 135–155 (IVWWAVSTAAFIILLYYLLGE), 182–202 (WALYPIVWILGTGGGFGIIAV), and 205–225 (EIMLYVMLDIGTKIGFGAVLL). Residue lysine 217 is modified to N6-(retinylidene)lysine.

This sequence belongs to the archaeal/bacterial/fungal opsin family. Post-translationally, the covalent binding of retinal to the apoprotein, bacterioopsin, generates bacteriorhodopsin.

The protein resides in the cell membrane. Its function is as follows. Has no proton-pumping activity but is potentially capable of functioning as a sensory SRII-like protein. The chromophore contains 36.5% all-trans-, 7.6% 11-cis- and 56.4% 13-cis-retinal in the dark and 30.1% 11-cis- and 47.7% 13-cis-retinal upon illumination with &gt;460 nm light. The polypeptide is Bacteriorhodopsin-II-like protein (bop2) (Haloquadratum walsbyi (strain DSM 16790 / HBSQ001)).